Reading from the N-terminus, the 118-residue chain is Vitelline membrane protein Vm32E (118 aa).

Residues 1-17 form the signal peptide; sequence MKIVALTLVAFVALAGA. The region spanning 36–75 is the VM domain; it reads GYPAPPCPTNYLFSCQPNLAPAPCAQEAQAPAYGSAGAYT.

The protein belongs to the vitelline membrane family.

It localises to the secreted. Major early eggshell protein. The polypeptide is Vitelline membrane protein Vm32E (Drosophila sechellia (Fruit fly)).